The primary structure comprises 213 residues: Peptidyl-tRNA hydrolase (213 aa).

Y15 provides a ligand contact to tRNA. H20 functions as the Proton acceptor in the catalytic mechanism. Positions 66, 68, and 114 each coordinate tRNA. Residues 186-213 form a disordered region; sequence MHAKPPRPKPPRPVTAPGAPVPPTEPSA. Residues 196–213 show a composition bias toward pro residues; it reads PRPVTAPGAPVPPTEPSA.

This sequence belongs to the PTH family. In terms of assembly, monomer.

Its subcellular location is the cytoplasm. It catalyses the reaction an N-acyl-L-alpha-aminoacyl-tRNA + H2O = an N-acyl-L-amino acid + a tRNA + H(+). Hydrolyzes ribosome-free peptidyl-tRNAs (with 1 or more amino acids incorporated), which drop off the ribosome during protein synthesis, or as a result of ribosome stalling. Functionally, catalyzes the release of premature peptidyl moieties from peptidyl-tRNA molecules trapped in stalled 50S ribosomal subunits, and thus maintains levels of free tRNAs and 50S ribosomes. This is Peptidyl-tRNA hydrolase from Leptothrix cholodnii (strain ATCC 51168 / LMG 8142 / SP-6) (Leptothrix discophora (strain SP-6)).